We begin with the raw amino-acid sequence, 238 residues long: MDIKLVYSTLDPVGVTIKKLGYRFEEINEDVTDFHYENGEAIVIFSRHESKAGIPSLTVHYPGNPSEEIMGGEPKKLGIAYPRLLTSILREIKKIDLNIEKTMEATHHGPTYQNVPVIFVEVGSNETYWTNDTIVKALVDSTIRSIDKVDEIDCEYYISGFGGPHYSRLFTKLADESCIGHVISKHYIDKLDDKVIIQTITNSVNTINKVVIDSLNSKQKERIIASLKKLNNINIEFR.

The protein belongs to the DtdA deacylase family. In terms of assembly, monomer. It depends on Zn(2+) as a cofactor.

It carries out the reaction a D-aminoacyl-tRNA + H2O = a tRNA + a D-alpha-amino acid + H(+). The enzyme catalyses glycyl-tRNA(Ala) + H2O = tRNA(Ala) + glycine + H(+). It catalyses the reaction D-tyrosyl-tRNA(Tyr) + H2O = D-tyrosine + tRNA(Tyr). Functionally, D-aminoacyl-tRNA deacylase with broad substrate specificity. By recycling D-aminoacyl-tRNA to D-amino acids and free tRNA molecules, this enzyme counteracts the toxicity associated with the formation of D-aminoacyl-tRNA entities in vivo. Catalyzes the hydrolysis of D-tyrosyl-tRNA(Tyr). The sequence is that of D-aminoacyl-tRNA deacylase from Saccharolobus solfataricus (strain ATCC 35092 / DSM 1617 / JCM 11322 / P2) (Sulfolobus solfataricus).